A 312-amino-acid chain; its full sequence is Very-long-chain 3-oxoacyl-CoA reductase (312 aa).

Residues 4 to 24 (APPAAGFLYWVGASTIAYLAL) traverse the membrane as a helical segment. Residue 50–79 (GEWAVVTGGTDGIGKAYAEELAKRGMKIVL) participates in NADP(+) binding. 2 helical membrane-spanning segments follow: residues 182-202 (GVIL…LTIY) and 269-285 (TTGY…NSIM). S189 lines the substrate pocket. The active-site Proton acceptor is the Y202. The Di-lysine motif motif lies at 308–312 (KRKKN).

This sequence belongs to the short-chain dehydrogenases/reductases (SDR) family. 17-beta-HSD 3 subfamily. As to expression, expressed in most tissues tested.

The protein localises to the endoplasmic reticulum membrane. It carries out the reaction a very-long-chain (3R)-3-hydroxyacyl-CoA + NADP(+) = a very-long-chain 3-oxoacyl-CoA + NADPH + H(+). The catalysed reaction is 17beta-estradiol + NAD(+) = estrone + NADH + H(+). It catalyses the reaction 17beta-estradiol + NADP(+) = estrone + NADPH + H(+). The enzyme catalyses 3-oxooctadecanoyl-CoA + NADPH + H(+) = (3R)-hydroxyoctadecanoyl-CoA + NADP(+). It carries out the reaction (7Z,10Z,13Z,16Z)-3-oxodocosatetraenoyl-CoA + NADPH + H(+) = (3R)-hydroxy-(7Z,10Z,13Z,16Z)-docosatetraenoyl-CoA + NADP(+). The catalysed reaction is 3-oxo-(7Z,10Z,13Z,16Z,19Z)-docosapentaenoyl-CoA + NADPH + H(+) = (3R)-hydroxy-(7Z,10Z,13Z,16Z,19Z)-docosapentaenoyl-CoA + NADP(+). It catalyses the reaction (8Z,11Z,14Z)-3-oxoeicosatrienoyl-CoA + NADPH + H(+) = (3R)-hydroxy-(8Z,11Z,14Z)-eicosatrienoyl-CoA + NADP(+). It participates in lipid metabolism; fatty acid biosynthesis. The protein operates within steroid biosynthesis; estrogen biosynthesis. Functionally, catalyzes the second of the four reactions of the long-chain fatty acids elongation cycle. This endoplasmic reticulum-bound enzymatic process, allows the addition of two carbons to the chain of long- and very long-chain fatty acids/VLCFAs per cycle. This enzyme has a 3-ketoacyl-CoA reductase activity, reducing 3-ketoacyl-CoA to 3-hydroxyacyl-CoA, within each cycle of fatty acid elongation. Thereby, it may participate in the production of VLCFAs of different chain lengths that are involved in multiple biological processes as precursors of membrane lipids and lipid mediators. May also catalyze the transformation of estrone (E1) into estradiol (E2) and play a role in estrogen formation. This Mus musculus (Mouse) protein is Very-long-chain 3-oxoacyl-CoA reductase.